The chain runs to 1101 residues: MQSLAEVSAPDAASVATAEELATLKQRMDEALALLKRAKLGGSERRNLYELPWYVIIGPPGSGKTTALMNSGLDFPLAAQMGAGAIRGVGGTRNCDWWFTDEAVLLDTAGRYTTQDSHAQVDKAAWLGFLDLLKTQRKRRPIDGAFIAISLSDLLLGSDAERAAHAQAIRARIQELYQQLGVRFPIYVMLTKFDLVPGFMEFFDSLNREERAQVWGMTFALDDGKSAEGPLAVFDSEFALLEQRLTARLVERLQQERDPARRDLVYGFPQQFAALRECLGEFLNGVFKPNPYEERPLLRGLYFTSGTQEGSPIDRLIGSMAQSMNLDRQHLARQTGTGRSYFIERLFREVAFGERGLVGTNPKVERRRKWLTIGALSATALVVLAVTAVWIASYRANQSYIAAVDQRVDPLARGIESLSPAQRDVLAVLPQLNAVQNLAGDAPSWAEGYGLYQGDMLGEESASVYRKLLIAVFAPRLVTRIEEQLRSGGSSDFLYEGLKAYLMLGSPDHYDADFIKAWISLDWERNLPRDLSPEQRQALHAHLDALLERRPPSARLDQDLVEDLRRQLQQLPVAQRVYDRVKRQRLPKDVPDFRISDAAGRDAPLVFARKSGKPLTDPLSGFFTYRGYREVFLTASLSQAGTIAEEQWVLGRDLNDAGDAANLALDVRRLYFQDYLRQWDDLLADLTVVPITNVTQAADVLRILSGPTSPFRKLLEAVARETDLQKGDRLVAAQVKKAADGTVDKLKQRLGSLVGQEEEGAREQPRQVDSDPISAHFAELNSLVSKGEGGNEPAPIDSLLEDMNALYVQVSAMAGASGDSLLGDAKNQVAAAASRVALSAERQPPVVQGLVKNVVNSTTSSMMGSVRNQLNAAWISDVVSVYRQSLAGRYPIAAGSSRDATLEDFGHFFGAGGVMDSYFRQYLQPYVDTSASTWRWQPGAAQKLGINPGVLHTFQRAAAIRDAFFRSGGMQPTVRFELKPVTMDAAISQFILDLDGQQLTYDHGPSRPVAMQWPSANGLGVVRLTVTPPPSSGRSGLTLEGPWAWFRLLDQSDLERGNSPDRFTLRLRIDGSSIACELRASSAFNPFKSRVVSGFSLPERL.

A helical membrane pass occupies residues 371 to 391 (LTIGALSATALVVLAVTAVWI).

It localises to the cell inner membrane. Core component of the type VI (T6SS) secretion system that plays a role in the release of toxins targeting both eukaryotic and prokaryotic species. Plays an essential role in stabilization of assembled TssK1 structure at a fixed perimembrane site. The protein is Type VI secretion system component TssM1 of Pseudomonas aeruginosa (strain ATCC 15692 / DSM 22644 / CIP 104116 / JCM 14847 / LMG 12228 / 1C / PRS 101 / PAO1).